A 434-amino-acid polypeptide reads, in one-letter code: Nicotinate phosphoribosyltransferase (434 aa).

A Phosphohistidine; by autocatalysis modification is found at histidine 242.

This sequence belongs to the NAPRTase family. In terms of processing, transiently phosphorylated on a His residue during the reaction cycle. Phosphorylation strongly increases the affinity for substrates and increases the rate of nicotinate D-ribonucleotide production. Dephosphorylation regenerates the low-affinity form of the enzyme, leading to product release.

It catalyses the reaction nicotinate + 5-phospho-alpha-D-ribose 1-diphosphate + ATP + H2O = nicotinate beta-D-ribonucleotide + ADP + phosphate + diphosphate. The protein operates within cofactor biosynthesis; NAD(+) biosynthesis; nicotinate D-ribonucleotide from nicotinate: step 1/1. Its function is as follows. Catalyzes the synthesis of beta-nicotinate D-ribonucleotide from nicotinate and 5-phospho-D-ribose 1-phosphate at the expense of ATP. The sequence is that of Nicotinate phosphoribosyltransferase from Rhizobium leguminosarum bv. trifolii (strain WSM2304).